A 67-amino-acid chain; its full sequence is SPbeta prophage-derived uncharacterized protein YoqK (67 aa).

The polypeptide is SPbeta prophage-derived uncharacterized protein YoqK (yoqK) (Bacillus subtilis (strain 168)).